A 346-amino-acid polypeptide reads, in one-letter code: Hydroxycarboxylic acid receptor 1 (346 aa).

The Extracellular segment spans residues 1-21 (MYNGSCCRIEGDTISQVMPPL). Asparagine 3 carries an N-linked (GlcNAc...) asparagine glycan. Residues 22 to 42 (LIVAFVLGALGNGVALCGFCF) traverse the membrane as a helical segment. Residues 43–49 (HMKTWKP) are Cytoplasmic-facing. Residues 50-70 (STVYLFNLAVADFLLMICLPF) form a helical membrane-spanning segment. Residues 71 to 89 (RTDYYLRRRHWAFGDIPCR) lie on the Extracellular side of the membrane. Cysteine 88 and cysteine 165 form a disulfide bridge. Residues 90–110 (VGLFTLAMNRAGSIVFLTVVA) traverse the membrane as a helical segment. Residues 111-130 (ADRYFKVVHPHHAVNTISTR) lie on the Cytoplasmic side of the membrane. A helical transmembrane segment spans residues 131 to 151 (VAAGIVCTLWALVILGTVYLL). The Extracellular segment spans residues 152–182 (LENHLCVQETAVSCESFIMESANGWHDIMFQ). A helical membrane pass occupies residues 183–203 (LEFFMPLGIILFCSFKIVWSL). Topologically, residues 204 to 220 (RRRQQLARQARMKKATR) are cytoplasmic. The chain crosses the membrane as a helical span at residues 221–241 (FIMVVAIVFITCYLPSVSARL). The Extracellular portion of the chain corresponds to 242–261 (YFLWTVPSSACDPSVHGALH). Residues 262 to 281 (ITLSFTYMNSMLDPLVYYFS) traverse the membrane as a helical segment. The Cytoplasmic segment spans residues 282–346 (SPSFPKFYNK…QWDPHIVEWH (65 aa)).

It belongs to the G-protein coupled receptor 1 family. In terms of tissue distribution, expressed abundantly in brown and white fat. It also detectable at lower levels in liver, kidney, skeletal muscle, brain and pituitary. Not detected in frontal, temporal and occipital lobes of the cortex, basal forebrain, caudate nucleus, nucleus accumbens and hippocampus.

The protein localises to the cell membrane. In terms of biological role, acts as a receptor for L-lactate and mediates its anti-lipolytic effect through a G(i)-protein-mediated pathway. The sequence is that of Hydroxycarboxylic acid receptor 1 (HCAR1) from Homo sapiens (Human).